We begin with the raw amino-acid sequence, 279 residues long: Apolipoprotein L domain-containing protein 1 (279 aa).

A run of 3 helical transmembrane segments spans residues 83-105 (SLVA…IVGL), 122-142 (GLGV…SLIF), and 192-212 (IALY…FLIP). Residues 226–253 (LKAKIQKLAESLESCTGALDELSEQLES) adopt a coiled-coil conformation.

This sequence belongs to the apolipoprotein L family. As to expression, expressed in neonatal dermal microvascular endothelial cells.

It localises to the cell membrane. The protein localises to the cell junction. It is found in the cytoplasmic vesicle. Its subcellular location is the secretory vesicle. Is a modulator of endothelial barrier permeability, required for proper organization of endothelial cell-cell junctions and cytoskeleton. It also plays a role in the modulation of secretory autophagy. May affect blood-brain barrier permeability. This is Apolipoprotein L domain-containing protein 1 (APOLD1) from Homo sapiens (Human).